Consider the following 616-residue polypeptide: Chaperone protein HscA homolog (616 aa).

This sequence belongs to the heat shock protein 70 family.

Chaperone involved in the maturation of iron-sulfur cluster-containing proteins. Has a low intrinsic ATPase activity which is markedly stimulated by HscB. This is Chaperone protein HscA homolog from Vibrio cholerae serotype O1 (strain M66-2).